The following is a 190-amino-acid chain: Peptidyl-tRNA hydrolase (190 aa).

Tyr18 is a tRNA binding site. The Proton acceptor role is filled by His23. TRNA-binding residues include Phe65, Asn67, and Asn113.

This sequence belongs to the PTH family. As to quaternary structure, monomer.

It localises to the cytoplasm. It catalyses the reaction an N-acyl-L-alpha-aminoacyl-tRNA + H2O = an N-acyl-L-amino acid + a tRNA + H(+). In terms of biological role, hydrolyzes ribosome-free peptidyl-tRNAs (with 1 or more amino acids incorporated), which drop off the ribosome during protein synthesis, or as a result of ribosome stalling. Its function is as follows. Catalyzes the release of premature peptidyl moieties from peptidyl-tRNA molecules trapped in stalled 50S ribosomal subunits, and thus maintains levels of free tRNAs and 50S ribosomes. The chain is Peptidyl-tRNA hydrolase from Akkermansia muciniphila (strain ATCC BAA-835 / DSM 22959 / JCM 33894 / BCRC 81048 / CCUG 64013 / CIP 107961 / Muc).